The sequence spans 217 residues: Deoxyribose-phosphate aldolase (217 aa).

Catalysis depends on aspartate 89, which acts as the Proton donor/acceptor. Lysine 151 serves as the catalytic Schiff-base intermediate with acetaldehyde. Catalysis depends on lysine 180, which acts as the Proton donor/acceptor.

Belongs to the DeoC/FbaB aldolase family. DeoC type 1 subfamily.

It localises to the cytoplasm. The enzyme catalyses 2-deoxy-D-ribose 5-phosphate = D-glyceraldehyde 3-phosphate + acetaldehyde. It functions in the pathway carbohydrate degradation; 2-deoxy-D-ribose 1-phosphate degradation; D-glyceraldehyde 3-phosphate and acetaldehyde from 2-deoxy-alpha-D-ribose 1-phosphate: step 2/2. Its function is as follows. Catalyzes a reversible aldol reaction between acetaldehyde and D-glyceraldehyde 3-phosphate to generate 2-deoxy-D-ribose 5-phosphate. The chain is Deoxyribose-phosphate aldolase from Metamycoplasma arthritidis (strain 158L3-1) (Mycoplasma arthritidis).